Here is a 185-residue protein sequence, read N- to C-terminus: ATP synthase subunit b, chloroplastic (185 aa).

A helical membrane pass occupies residues 27–49 (LATNPINLSVVLGVLIFFGKGVL).

It belongs to the ATPase B chain family. F-type ATPases have 2 components, F(1) - the catalytic core - and F(0) - the membrane proton channel. F(1) has five subunits: alpha(3), beta(3), gamma(1), delta(1), epsilon(1). F(0) has four main subunits: a(1), b(1), b'(1) and c(10-14). The alpha and beta chains form an alternating ring which encloses part of the gamma chain. F(1) is attached to F(0) by a central stalk formed by the gamma and epsilon chains, while a peripheral stalk is formed by the delta, b and b' chains.

It is found in the plastid. Its subcellular location is the chloroplast thylakoid membrane. Functionally, f(1)F(0) ATP synthase produces ATP from ADP in the presence of a proton or sodium gradient. F-type ATPases consist of two structural domains, F(1) containing the extramembraneous catalytic core and F(0) containing the membrane proton channel, linked together by a central stalk and a peripheral stalk. During catalysis, ATP synthesis in the catalytic domain of F(1) is coupled via a rotary mechanism of the central stalk subunits to proton translocation. Its function is as follows. Component of the F(0) channel, it forms part of the peripheral stalk, linking F(1) to F(0). The chain is ATP synthase subunit b, chloroplastic from Vitis vinifera (Grape).